The following is a 138-amino-acid chain: Large ribosomal subunit protein uL16m (138 aa).

Belongs to the universal ribosomal protein uL16 family.

The protein resides in the mitochondrion. The chain is Large ribosomal subunit protein uL16m (RPL16) from Chondrus crispus (Carrageen Irish moss).